A 301-amino-acid chain; its full sequence is tRNA dimethylallyltransferase (301 aa).

9–16 provides a ligand contact to ATP; that stretch reads GPTASGKS. 11 to 16 is a substrate binding site; sequence TASGKS. The interval 34-37 is interaction with substrate tRNA; sequence DSMQ.

Belongs to the IPP transferase family. As to quaternary structure, monomer. Mg(2+) serves as cofactor.

The catalysed reaction is adenosine(37) in tRNA + dimethylallyl diphosphate = N(6)-dimethylallyladenosine(37) in tRNA + diphosphate. Its function is as follows. Catalyzes the transfer of a dimethylallyl group onto the adenine at position 37 in tRNAs that read codons beginning with uridine, leading to the formation of N6-(dimethylallyl)adenosine (i(6)A). This Corynebacterium glutamicum (strain ATCC 13032 / DSM 20300 / JCM 1318 / BCRC 11384 / CCUG 27702 / LMG 3730 / NBRC 12168 / NCIMB 10025 / NRRL B-2784 / 534) protein is tRNA dimethylallyltransferase.